Reading from the N-terminus, the 83-residue chain is Insect toxin 2-13 (83 aa).

Residues 1-21 (MKLLLLLIITASMLIEGLVNA) form the signal peptide. In terms of domain architecture, LCN-type CS-alpha/beta spans 22–80 (DVYIRRHDGCKISCTVNDKYCDNECKSEGGSYGYCYAFGCWCEGLPNDKAWKSETNTCG). Disulfide bonds link Cys31–Cys79, Cys35–Cys56, Cys42–Cys61, and Cys46–Cys63. The residue at position 80 (Gly80) is a Glycine amide.

Belongs to the long (4 C-C) scorpion toxin superfamily. Sodium channel inhibitor family. Beta subfamily. As to expression, expressed by the venom gland.

Its subcellular location is the secreted. In terms of biological role, depressant insect toxins cause a transient contraction paralysis followed by a slow flaccid paralysis. They bind voltage-independently to sodium channels (Nav) and block action potentials, primarily by depolarizing the axonal membrane and suppressing the sodium current. The sequence is that of Insect toxin 2-13 from Leiurus hebraeus (Hebrew deathstalker scorpion).